The chain runs to 842 residues: Gamma-aminobutyric acid type B receptor subunit 2 (842 aa).

The N-terminal stretch at 1–17 (MSRWLSLLLFAVQAVGG) is a signal peptide. The Extracellular segment spans residues 18–438 (YEAGEELSCK…TERRREHISS (421 aa)). Asn-274, Asn-279, Asn-327, and Asn-366 each carry an N-linked (GlcNAc...) asparagine glycan. Residues 439–459 (ILFLAMSLLALIGIFLALIFL) form a helical membrane-spanning segment. The Cytoplasmic portion of the chain corresponds to 460 to 477 (LINFRYRNHRFIKMSSPN). A helical membrane pass occupies residues 478–498 (LNNIIIAGSICTFASVIMLGL). Residues 499 to 506 (DTRIVSPD) are Extracellular-facing. Residues 507–527 (VFVWLCYTKTWTLCIGFTLSF) traverse the membrane as a helical segment. At 528–556 (GAMFSKTWRVHSIFTNIRMDRKAIKDSKL) the chain is on the cytoplasmic side. Residues 557–577 (FIILGILLFIDICVLVTWAFV) form a helical membrane-spanning segment. The Extracellular portion of the chain corresponds to 578–610 (SPFSYTVTELPHIPEDNIVIIPEVEKCNSSHSG). N-linked (GlcNAc...) asparagine glycosylation is present at Asn-605. Residues 611-631 (VFQAVLYAVKGVLMILGCFLA) form a helical membrane-spanning segment. Over 632–647 (WETRHVNVPALNDSKY) the chain is Cytoplasmic. The chain crosses the membrane as a helical span at residues 648-668 (IGTSVYCCVVMSVLGLSTSVI). At 669 to 676 (LQERVNEM) the chain is on the extracellular side. The chain crosses the membrane as a helical span at residues 677–697 (FSLASFFVIFSTTLTLCLVFV). The Cytoplasmic portion of the chain corresponds to 698–842 (PKVIELARNP…VDPDEPSTKL (145 aa)). Positions 725 to 740 (AKTSQPMSPQPRSDSS) are enriched in polar residues. 2 disordered regions span residues 725–744 (AKTSQPMSPQPRSDSSGDLI) and 791–842 (SPSS…STKL).

The protein belongs to the G-protein coupled receptor 3 family. In terms of assembly, may form a heterodimer with gbb-1. As to expression, expressed in cholinergic motor neurons.

It is found in the cell membrane. Functionally, component of a heterodimeric G-protein coupled receptor for GABA, formed by gbb-1 and gbb-2. Within the heterodimeric GABA receptor, only gbb-1 seems to bind agonists, while gbb-2 mediates coupling to G proteins. Ligand binding causes a conformation change that triggers signaling via guanine nucleotide-binding proteins (G proteins) and modulates the activity of down-stream effectors, such as adenylate cyclase. Signaling inhibits adenylate cyclase, stimulates phospholipase A2, activates potassium channels, inactivates voltage-dependent calcium-channels and modulates inositol phospholipid hydrolysis. Plays a critical role in the fine-tuning of inhibitory synaptic transmission. Pre-synaptic GABA receptor inhibits neurotransmitter release by down-regulating high-voltage activated calcium channels, whereas postsynaptic GABA receptor decreases neuronal excitability by activating a prominent inwardly rectifying potassium (Kir) conductance that underlies the late inhibitory postsynaptic potentials. Along with gbb-1, may couple to the G(o)-alpha G-protein goa-1 to negatively regulate cholinergic receptor activity in the presence of high levels of acetylcholine in ventral cord motor neurons. As acetylcholine depolarizes body wall muscles, modulation of acetylcholine levels most likely results in the control of locomotory behavior. Regulates locomotory behavior in response to GABA release by GABAergic motor neurons. The protein is Gamma-aminobutyric acid type B receptor subunit 2 of Caenorhabditis elegans.